The primary structure comprises 275 residues: Glutamate racemase (275 aa).

Substrate contacts are provided by residues 12–13 (DS) and 44–45 (YG). Cysteine 75 serves as the catalytic Proton donor/acceptor. 76–77 (NT) is a binding site for substrate. Cysteine 185 functions as the Proton donor/acceptor in the catalytic mechanism. Substrate is bound at residue 186 to 187 (TH).

The protein belongs to the aspartate/glutamate racemases family.

It catalyses the reaction L-glutamate = D-glutamate. It participates in cell wall biogenesis; peptidoglycan biosynthesis. Its function is as follows. Provides the (R)-glutamate required for cell wall biosynthesis. The chain is Glutamate racemase from Mycolicibacterium paratuberculosis (strain ATCC BAA-968 / K-10) (Mycobacterium paratuberculosis).